The sequence spans 403 residues: Histidine--tRNA ligase (403 aa).

Belongs to the class-II aminoacyl-tRNA synthetase family. As to quaternary structure, homodimer.

The protein resides in the cytoplasm. It carries out the reaction tRNA(His) + L-histidine + ATP = L-histidyl-tRNA(His) + AMP + diphosphate + H(+). This is Histidine--tRNA ligase from Sulfurovum sp. (strain NBC37-1).